The sequence spans 985 residues: Ankyrin repeat domain-containing protein 24 (985 aa).

ANK repeat units follow at residues 52 to 81 (EGKS…DVMS), 85 to 114 (AGYN…VVDI), 118 to 147 (SGWT…HMNP), 151 to 180 (SGAT…ATND), and 184 to 213 (QGRT…QLSI). Disordered regions lie at residues 243–293 (RSSP…DRDA), 311–360 (IRGL…LGRE), 386–412 (QDEE…SAEE), 476–503 (YTEA…TAYQ), and 594–614 (DNAE…NPGM). Residues 291–488 (RDAYEEIVRL…AMHSQQQQQE (198 aa)) are a coiled coil. Composition is skewed to basic and acidic residues over residues 311–326 (IRGL…KEPL) and 349–360 (EKQEEKESLGRE).

In terms of assembly, homodimer. Interacts (via C-terminal domain) with TRIOBP (via C-terminal domain) isoform 4; recruits TRIOBP isoform 4 to stereocilia rootlets. In terms of tissue distribution, expressed in vestibular hair bundles.

It is found in the cell membrane. Its subcellular location is the cell projection. It localises to the stereocilium. Functionally, component of the stereocilia rootlet in hair cells of inner ear. Bridges the apical plasma membrane with the lower rootlet and maintains normal distribution of TRIOBP, thereby reinforcing stereocilia insertion points and organizing rootlets for hearing with long-term resilience. This chain is Ankyrin repeat domain-containing protein 24 (Ankrd24), found in Mus musculus (Mouse).